Reading from the N-terminus, the 517-residue chain is Bifunctional purine biosynthesis protein PurH (517 aa).

Positions 1–145 (MSPLALVSVS…KNHKDVSVLV (145 aa)) constitute an MGS-like domain.

This sequence belongs to the PurH family.

The enzyme catalyses (6R)-10-formyltetrahydrofolate + 5-amino-1-(5-phospho-beta-D-ribosyl)imidazole-4-carboxamide = 5-formamido-1-(5-phospho-D-ribosyl)imidazole-4-carboxamide + (6S)-5,6,7,8-tetrahydrofolate. It carries out the reaction IMP + H2O = 5-formamido-1-(5-phospho-D-ribosyl)imidazole-4-carboxamide. It functions in the pathway purine metabolism; IMP biosynthesis via de novo pathway; 5-formamido-1-(5-phospho-D-ribosyl)imidazole-4-carboxamide from 5-amino-1-(5-phospho-D-ribosyl)imidazole-4-carboxamide (10-formyl THF route): step 1/1. The protein operates within purine metabolism; IMP biosynthesis via de novo pathway; IMP from 5-formamido-1-(5-phospho-D-ribosyl)imidazole-4-carboxamide: step 1/1. This is Bifunctional purine biosynthesis protein PurH from Prochlorococcus marinus (strain AS9601).